The following is a 709-amino-acid chain: Polyribonucleotide nucleotidyltransferase (709 aa).

2 residues coordinate Mg(2+): aspartate 489 and aspartate 495. Positions 556–615 (PKIDMIKIDVDKIKVVIGKGGETIDKIIAETGVKIDIDEEGNVSIFSSDQAAIDRTKDII) constitute a KH domain. The S1 motif domain maps to 625–693 (GEVYHAKVVR…DKGRVDASMK (69 aa)).

The protein belongs to the polyribonucleotide nucleotidyltransferase family. It depends on Mg(2+) as a cofactor.

The protein resides in the cytoplasm. The enzyme catalyses RNA(n+1) + phosphate = RNA(n) + a ribonucleoside 5'-diphosphate. Its function is as follows. Involved in mRNA degradation. Catalyzes the phosphorolysis of single-stranded polyribonucleotides processively in the 3'- to 5'-direction. The sequence is that of Polyribonucleotide nucleotidyltransferase from Streptococcus agalactiae serotype V (strain ATCC BAA-611 / 2603 V/R).